Reading from the N-terminus, the 478-residue chain is PRAME family member 27 (478 aa).

An LRR 1 repeat occupies 17–40 (RSLLRDQALAMSTLEELPTELFPP). The stretch at 99-126 (RWKLQVLDLQDVCENFWMVWSEAMARGS) is one LRR 1; degenerate repeat. The stretch at 181–205 (HLCCKKLKILGMPFRNIRSILKMVN) is one LRR 2; degenerate repeat. The LRR 3; degenerate repeat unit spans residues 206-232 (LDCIQEVEVNCKWVLPILTQFTPYLGH). The stretch at 233 to 268 (MRNLQKLVLSHMDVSRYVSPEQKKEIVTQFTTQFLK) is one LRR 4; degenerate repeat. LRR repeat units lie at residues 269–294 (LHCL…LSCL), 295–326 (KTSL…SQLK), 327–348 (TLDL…ILLE), 351–378 (AATL…ALSR), and 379–403 (CFEL…LLSH).

This sequence belongs to the PRAME family.

This is PRAME family member 27 from Homo sapiens (Human).